The chain runs to 1511 residues: DNA-directed RNA polymerase subunit beta' (1511 aa).

Cysteine 75, cysteine 77, cysteine 90, and cysteine 93 together coordinate Zn(2+). Mg(2+) is bound by residues aspartate 474, aspartate 476, and aspartate 478. Residues cysteine 804, cysteine 878, cysteine 885, and cysteine 888 each coordinate Zn(2+).

Belongs to the RNA polymerase beta' chain family. As to quaternary structure, the RNAP catalytic core consists of 2 alpha, 1 beta, 1 beta' and 1 omega subunit. When a sigma factor is associated with the core the holoenzyme is formed, which can initiate transcription. The cofactor is Mg(2+). Zn(2+) is required as a cofactor.

The catalysed reaction is RNA(n) + a ribonucleoside 5'-triphosphate = RNA(n+1) + diphosphate. Functionally, DNA-dependent RNA polymerase catalyzes the transcription of DNA into RNA using the four ribonucleoside triphosphates as substrates. The protein is DNA-directed RNA polymerase subunit beta' of Aliarcobacter butzleri (strain RM4018) (Arcobacter butzleri).